The primary structure comprises 600 residues: MAALAALAKKVWSARRLLVLLLVPLALLPILFALPPKEGRCLYVILLMAVYWCTEALPLSVTALLPIILFPFMGILPSSKVCPQYFLDTNFLFLSGLIMASAIEERNLHRRIALKVLMLVGVQPARLILGMMVTTSFLSMWLSNTASTAMMLPIASAILKSLFGQRDTRKDLPREGEDSTAAVRGNGLRTVPTEMQFLASSEGGHAEDVEAPLELPDDSKEEEHRRNIWKGFLISIPYSASIGGTATLTGTAPNLILLGQLKSFFPQCDVVNFGSWFIFAFPLMLLFLLVGWLWISFLYGGMSWRGWRKKNSKLQDVAEDKAKAVIQEEFQNLGPIKFAEQAVFILFCLFAILLFSRDPKFIPGWASLFAPGFVSDAVTGVAIVTILFFFPSQKPSLKWWFDFKAPNSETEPLLSWKKAQETVPWNIILLLGGGFAMAKGCEESGLSAWIGGQLHPLEHVPPLLAVLLITVVIAFFTEFASNTATIIIFLPVLAELAIRLHVHPLYLMIPGTVSCSYAFMLPVSTPPNSIAFSTGHLLVKDMVRTGLLMNLMGVLLLSLAMNTWAQAIFQLGTFPDWANTHAANVTALPPALTNNTVQTL.

Residues 1–16 (MAALAALAKKVWSARR) lie on the Cytoplasmic side of the membrane. A helical transmembrane segment spans residues 17 to 37 (LLVLLLVPLALLPILFALPPK). Topologically, residues 38–55 (EGRCLYVILLMAVYWCTE) are extracellular. Residues 56 to 76 (ALPLSVTALLPIILFPFMGIL) form a helical membrane-spanning segment. The Cytoplasmic portion of the chain corresponds to 77-82 (PSSKVC). A helical membrane pass occupies residues 83–103 (PQYFLDTNFLFLSGLIMASAI). The Extracellular segment spans residues 104–137 (EERNLHRRIALKVLMLVGVQPARLILGMMVTTSF). A helical transmembrane segment spans residues 138 to 158 (LSMWLSNTASTAMMLPIASAI). Residues 159 to 229 (LKSLFGQRDT…KEEEHRRNIW (71 aa)) lie on the Cytoplasmic side of the membrane. A helical transmembrane segment spans residues 230 to 250 (KGFLISIPYSASIGGTATLTG). Topologically, residues 251-278 (TAPNLILLGQLKSFFPQCDVVNFGSWFI) are extracellular. A helical transmembrane segment spans residues 279–299 (FAFPLMLLFLLVGWLWISFLY). Topologically, residues 300–336 (GGMSWRGWRKKNSKLQDVAEDKAKAVIQEEFQNLGPI) are cytoplasmic. The chain crosses the membrane as a helical span at residues 337-357 (KFAEQAVFILFCLFAILLFSR). The Extracellular portion of the chain corresponds to 358–372 (DPKFIPGWASLFAPG). Residues 373–393 (FVSDAVTGVAIVTILFFFPSQ) form a helical membrane-spanning segment. Residues 394 to 422 (KPSLKWWFDFKAPNSETEPLLSWKKAQET) are Cytoplasmic-facing. Residues 423–443 (VPWNIILLLGGGFAMAKGCEE) constitute an intramembrane region (helical). Over 444 to 461 (SGLSAWIGGQLHPLEHVP) the chain is Cytoplasmic. Residues 462 to 482 (PLLAVLLITVVIAFFTEFASN) form a helical membrane-spanning segment. Residues 483-505 (TATIIIFLPVLAELAIRLHVHPL) are Extracellular-facing. Residues 506–526 (YLMIPGTVSCSYAFMLPVSTP) form a helical membrane-spanning segment. Topologically, residues 527–546 (PNSIAFSTGHLLVKDMVRTG) are cytoplasmic. The chain crosses the membrane as a helical span at residues 547–567 (LLMNLMGVLLLSLAMNTWAQA). The Extracellular segment spans residues 568–600 (IFQLGTFPDWANTHAANVTALPPALTNNTVQTL). N-linked (GlcNAc...) asparagine glycans are attached at residues asparagine 584 and asparagine 594.

It belongs to the SLC13A/DASS transporter (TC 2.A.47) family. NADC subfamily. Highly expressed in proximal parts of straight tubules in the kidney. Detected in placenta, in brain, and in liver. Strongly expressed within the meningeal layers of supporting tissue that surround the brain and relatively weakly expressed throughout the cerebral cortex, hippocampus, and cerebellum.

The protein resides in the cell membrane. It carries out the reaction succinate(out) + 3 Na(+)(out) = succinate(in) + 3 Na(+)(in). It catalyses the reaction 2-oxoglutarate(out) + 3 Na(+)(out) = 2-oxoglutarate(in) + 3 Na(+)(in). The catalysed reaction is N-acetyl-L-aspartate(out) + 3 Na(+)(out) = N-acetyl-L-aspartate(in) + 3 Na(+)(in). The enzyme catalyses glutarate(out) + 3 Na(+)(out) = glutarate(in) + 3 Na(+)(in). It carries out the reaction fumarate(out) + 3 Na(+)(out) = fumarate(in) + 3 Na(+)(in). It catalyses the reaction malate(out) + 3 Na(+)(out) = malate(in) + 3 Na(+)(in). The catalysed reaction is 2,2-dimethylsuccinate(out) + 3 Na(+)(out) = 2,2-dimethylsuccinate(in) + 3 Na(+)(in). The enzyme catalyses 2,3-dimethylsuccinate(out) + 3 Na(+)(out) = 2,3-dimethylsuccinate(in) + 3 Na(+)(in). It carries out the reaction itaconate(out) + 3 Na(+)(out) = itaconate(in) + 3 Na(+)(in). Its activity is regulated as follows. Li(+) decreases succinate transport in the presence of Na(+). Its function is as follows. High-affinity sodium-dicarboxylate cotransporter that accepts a range of substrates with 4-6 carbon atoms, such as the citric acid cycle intermediates succinate and alpha-ketoglutarate (2-oxoglutarate), as well as other compounds including N-acetyl-L-aspartate. Transports the dicarboxylate into the cell with a probable stoichiometry of 3 Na(+) for 1 divalent dicarboxylate, rendering the process electrogenic. Can transport citrate in a Na(+)-dependent manner, recognizing the divalent form of citrate rather than the trivalent form which is normally found in blood. Imports itaconate in hepatocytes leading to activation of TFEB-dependent lysosomal biogenesis involved in antibacterial innate immune response. In Rattus norvegicus (Rat), this protein is Na(+)/dicarboxylate cotransporter 3 (Slc13a3).